Reading from the N-terminus, the 385-residue chain is Isocitrate dehydrogenase [NAD] subunit beta, mitochondrial (385 aa).

The N-terminal 34 residues, methionine 1–alanine 34, are a transit peptide targeting the mitochondrion. Position 199 is an N6-acetyllysine (lysine 199).

Belongs to the isocitrate and isopropylmalate dehydrogenases family. As to quaternary structure, heterooligomer of subunits alpha (IDH3A), beta (IDH3B), and gamma (IDH3G) in the apparent ratio of 2:1:1. The heterodimer containing one IDH3A and one IDH3B subunit and the heterodimer containing one IDH3A and one IDH3G subunit assemble into a heterotetramer (which contains two subunits of IDH3A, one of IDH3B and one of IDH3G) and further into the heterooctamer.

Its subcellular location is the mitochondrion. With respect to regulation, the heterotetramer and the heterodimer composed of IDH3A and IDH3G subunits can be allosterically activated by citrate (CIT) or/and ADP, and the two activators can act independently or synergistically. The heterodimer composed of IDH3A and IDH3B subunits cannot be allosterically regulated and the allosteric regulation of the heterotetramer is through the IDH3G subunit and not the IDH3B subunit. The IDH3G subunit contains the allosteric site which consists of a CIT-binding site and an ADP-binding site, and the binding of CIT and ADP causes conformational changes at the allosteric site which are transmitted to the active site in the catalytic subunit (IDH3A) through a cascade of conformational changes at the heterodimer interface, leading to stabilization of the isocitrate-binding at the active site and thus activation of the enzyme. ATP can activate the heterotetramer and the heterodimer composed of IDH3A and IDH3G subunits at low concentrations but inhibits their activities at high concentrations, whereas ATP exhibits only inhibitory effect on the heterodimer composed of IDH3A and IDH3B subunits. Functionally, plays a structural role to facilitate the assembly and ensure the full activity of the enzyme catalyzing the decarboxylation of isocitrate (ICT) into alpha-ketoglutarate. The heterodimer composed of the alpha (IDH3A) and beta (IDH3B) subunits and the heterodimer composed of the alpha (IDH3A) and gamma (IDH3G) subunits, have considerable basal activity but the full activity of the heterotetramer (containing two subunits of IDH3A, one of IDH3B and one of IDH3G) requires the assembly and cooperative function of both heterodimers. The protein is Isocitrate dehydrogenase [NAD] subunit beta, mitochondrial (IDH3B) of Macaca fascicularis (Crab-eating macaque).